We begin with the raw amino-acid sequence, 1076 residues long: Histone deacetylase 4 (1076 aa).

A coiled-coil region spans residues 66 to 169 (REQQLQQELL…GKESAVASTE (104 aa)). Positions 117–312 (MLAMKHQQEL…NSSSGNVSTE (196 aa)) are interaction with MEF2A. A compositionally biased stretch (basic and acidic residues) spans 132-162 (KLERHRQEQELEKQHREQKLQQLKNKEKGKE). 3 disordered regions span residues 132–166 (KLERHRQEQELEKQHREQKLQQLKNKEKGKESAVA), 205–225 (TQHSSLDQSSPPQSGVSASYN), and 239–323 (PLRK…PSAP). Positions 205–224 (TQHSSLDQSSPPQSGVSASY) are enriched in polar residues. Phosphoserine is present on Ser209. Residue Ser245 is modified to Phosphoserine; by CaMK4 and SIK1. Positions 258-273 (KVAERRSSPLLRRKDG) are enriched in basic and acidic residues. Low complexity predominate over residues 289 to 310 (SACSSAPGSGPSSPNSSSGNVS). The PxLPxI/L motif; mediates interaction with ANKRA2 and 14-3-3 proteins motif lies at 348–353 (PSLPNI). Ser349 is modified (phosphoserine). Ser465 is subject to Phosphoserine; by CaMK4 and SIK1. Disordered stretches follow at residues 506 to 529 (ISKPSEPPRQPESHPEETEEELRE), 541 to 580 (RLPGQKEPSLAGVQVKQEPIESEEEEAEATRETEPGQRPA), and 622 to 645 (RPLSRAQSSPASATFPMSVQEPPT). Residues 514 to 529 (RQPESHPEETEEELRE) are compositionally biased toward basic and acidic residues. Lys556 participates in a covalent cross-link: Glycyl lysine isopeptide (Lys-Gly) (interchain with G-Cter in SUMO). Ser562 carries the post-translational modification Phosphoserine. The span at 626–638 (RAQSSPASATFPM) shows a compositional bias: polar residues. Phosphoserine; by CaMK4 is present on Ser629. Ser630 carries the post-translational modification Phosphoserine. The tract at residues 652-1076 (GLVYDTLMLK…EEPMEEEPPL (425 aa)) is histone deacetylase. Cys664, Cys666, His672, and Cys743 together coordinate Zn(2+). His795 is an active-site residue. Positions 1043–1076 (EEAETVTAMASLSVGVKPAEKRSEEEPMEEEPPL) match the Nuclear export signal motif.

This sequence belongs to the histone deacetylase family. HD type 2 subfamily. As to quaternary structure, homodimer. Homodimerization via its N-terminal domain. Interacts with HDAC7. Interacts with MEF2A, MEF2C, MEF2D, MORC2 and NR2C1. Interacts with a 14-3-3 chaperone proteins in a phosphorylation dependent manner. Interacts with 14-3-3 protein YWHAB. Interacts with BTBD14B. Interacts with KDM5B. Interacts (via PxLPxI/L motif) with ANKRA2 (via ankyrin repeats). Interacts with CUL7 (as part of the 3M complex); negatively regulated by ANKRA2. Interacts with EP300 in the presence of TFAP2C. Interacts with AHRR. Interacts with MYOCD. Interacts with HSPA1A and HSPA1B leading to their deacetylation at 'Lys-77'. Interacts with ZBTB7B; the interaction allows the recruitment of HDAC4 on CD8 loci for deacetylation and possible inhibition of CD8 genes expression. Interacts with DHX36. Interacts with SIK3; this interaction leads to HDAC4 retention in the cytoplasm. Interacts with ZNF638. Post-translationally, phosphorylated by CaMK4 at Ser-245, Ser-465 and Ser-629. Phosphorylation at other residues by CaMK2D is required for the interaction with 14-3-3. Phosphorylation at Ser-349, within the PxLPxI/L motif, impairs the binding of ANKRA2 but generates a high-affinity docking site for 14-3-3. Sumoylation on Lys-556 is promoted by the E3 SUMO-protein ligase RANBP2, and prevented by phosphorylation by CaMK4.

It is found in the nucleus. The protein localises to the cytoplasm. The enzyme catalyses N(6)-acetyl-L-lysyl-[histone] + H2O = L-lysyl-[histone] + acetate. In terms of biological role, responsible for the deacetylation of lysine residues on the N-terminal part of the core histones (H2A, H2B, H3 and H4). Histone deacetylation gives a tag for epigenetic repression and plays an important role in transcriptional regulation, cell cycle progression and developmental events. Histone deacetylases act via the formation of large multiprotein complexes. Involved in muscle maturation via its interaction with the myocyte enhancer factors such as MEF2A, MEF2C and MEF2D. Deacetylates HSPA1A and HSPA1A at 'Lys-77' leading to their preferential binding to co-chaperone STUB1. The polypeptide is Histone deacetylase 4 (Hdac4) (Mus musculus (Mouse)).